A 63-amino-acid polypeptide reads, in one-letter code: Large ribosomal subunit protein bL32 (63 aa).

Residues 1–27 are disordered; that stretch reads MANPKAKMSKSRRDKRRAQFNARTKPV. A compositionally biased stretch (basic residues) spans 7–18; it reads KMSKSRRDKRRA.

It belongs to the bacterial ribosomal protein bL32 family.

The polypeptide is Large ribosomal subunit protein bL32 (Chlorobium phaeobacteroides (strain DSM 266 / SMG 266 / 2430)).